Here is a 431-residue protein sequence, read N- to C-terminus: Glutamate-1-semialdehyde 2,1-aminomutase (431 aa).

Lys-269 is subject to N6-(pyridoxal phosphate)lysine.

This sequence belongs to the class-III pyridoxal-phosphate-dependent aminotransferase family. HemL subfamily. As to quaternary structure, homodimer. Requires pyridoxal 5'-phosphate as cofactor.

The protein resides in the cytoplasm. The catalysed reaction is (S)-4-amino-5-oxopentanoate = 5-aminolevulinate. It participates in porphyrin-containing compound metabolism; protoporphyrin-IX biosynthesis; 5-aminolevulinate from L-glutamyl-tRNA(Glu): step 2/2. Its pathway is porphyrin-containing compound metabolism; chlorophyll biosynthesis. In Chlorobium chlorochromatii (strain CaD3), this protein is Glutamate-1-semialdehyde 2,1-aminomutase.